A 74-amino-acid chain; its full sequence is Toxin BmKaTx17 (74 aa).

An N-terminal signal peptide occupies residues 1–8 (LLMTGVES). The 63-residue stretch at 10 to 72 (RDAYIAKNYN…KPIRIPGKCH (63 aa)) folds into the LCN-type CS-alpha/beta domain. Disulfide bonds link Cys-20–Cys-71, Cys-24–Cys-44, Cys-30–Cys-54, and Cys-34–Cys-56. Positions 73-74 (RR) are cleaved as a propeptide — removed by a carboxypeptidase.

This sequence belongs to the long (4 C-C) scorpion toxin superfamily. Sodium channel inhibitor family. Alpha subfamily. Expressed by the venom gland.

It localises to the secreted. In terms of biological role, alpha toxins bind voltage-independently at site-3 of sodium channels (Nav) and inhibit the inactivation of the activated channels, thereby blocking neuronal transmission. The polypeptide is Toxin BmKaTx17 (Olivierus martensii (Manchurian scorpion)).